A 1019-amino-acid chain; its full sequence is DNA topoisomerase 1 (1019 aa).

Positions 1–160 (MNSIQVKNEP…KTMSITGSGE (160 aa)) are disordered. Positions 46 to 56 (KPLAKRPKVED) are enriched in basic and acidic residues. The span at 62-78 (PLTSTVSSQNGVQKRSG) shows a compositional bias: polar residues. 2 stretches are compositionally biased toward acidic residues: residues 83-93 (DDNDDDSDSDS) and 107-136 (SDDD…DDDD). 3 interaction with DNA regions span residues 379-380 (KY), 442-447 (RAGNEK), and 556-558 (SAK). Residues 386–860 (TSNFKTNSDR…KKVKKEEEEN (475 aa)) form the Topo IB-type catalytic domain. Residues 716 to 737 (EQKGLTGDDGTPKKGKKAKNVE) are disordered. The active-site O-(3'-phospho-DNA)-tyrosine intermediate is Y822. Disordered regions lie at residues 843–890 (GQGK…TGDS) and 940–1019 (MRKL…AAVV). The span at 854–863 (KKEEEENDIK) shows a compositional bias: basic and acidic residues. Basic residues predominate over residues 864–879 (PKKKDAKGAASKKRAA). 2 stretches are compositionally biased toward basic and acidic residues: residues 940–950 (MRKLDSAERKG) and 980–996 (TSAD…VDKT). Acidic residues predominate over residues 997–1012 (EESDDDLSSDSSDDED).

This sequence belongs to the type IB topoisomerase family. In terms of assembly, monomer.

It catalyses the reaction ATP-independent breakage of single-stranded DNA, followed by passage and rejoining.. Functionally, releases the supercoiling and torsional tension of DNA introduced during the DNA replication and transcription by transiently cleaving and rejoining one strand of the DNA duplex. Introduces a single-strand break via transesterification at a target site in duplex DNA. The scissile phosphodiester is attacked by the catalytic tyrosine of the enzyme, resulting in the formation of a DNA-(3'-phosphotyrosyl)-enzyme intermediate and the expulsion of a 5'-OH DNA strand. The free DNA strand then rotates around the intact phosphodiester bond on the opposing strand, thus removing DNA supercoils. Finally, in the religation step, the DNA 5'-OH attacks the covalent intermediate to expel the active-site tyrosine and restore the DNA phosphodiester backbone. This chain is DNA topoisomerase 1 (TOP1), found in Mycosarcoma maydis (Corn smut fungus).